The following is a 388-amino-acid chain: Na(+)/H(+) antiporter NhaA (388 aa).

Topologically, residues 1 to 11 (MKHLHRFFSSD) are cytoplasmic. Residues 12–31 (ASGGIILIIAAILAMIMANS) form a helical membrane-spanning segment. Over 32–58 (GATSGWYHDFLETPVQLRVGSLEINKN) the chain is Periplasmic. Residues 59–80 (MLLWINDALMAVFFLLVGLEVK) form a helical membrane-spanning segment. Topologically, residues 81-96 (RELMQGSLASLLQAAF) are cytoplasmic. A helical membrane pass occupies residues 97–116 (PVIAAIGGMIVPALLYLAFN). The Periplasmic segment spans residues 117-122 (YADPIT). The chain crosses the membrane as a helical span at residues 123–130 (REGWAIPA). Over 131 to 154 (ATDIAFALGVLALLGSRVPLVLKI) the chain is Cytoplasmic. Residues 155–176 (FLMALAIIDDLGAIIIIALFYT) form a helical membrane-spanning segment. Over 177 to 180 (NDLS) the chain is Periplasmic. The chain crosses the membrane as a helical span at residues 181–200 (MASLGVAAVAIAVLAVLNLC). The Cytoplasmic segment spans residues 201 to 204 (GVRR). Residues 205 to 222 (TGVYILVGVVLWTAVLKS) form a helical membrane-spanning segment. A topological domain (periplasmic) is located at residue Gly223. A helical membrane pass occupies residues 224–236 (VHATLAGVIVGFF). At 237–253 (IPLKEKHGRSPAKRLEH) the chain is on the cytoplasmic side. The helical transmembrane segment at 254 to 272 (VLHPWVAYLILPLFAFANA) threads the bilayer. Over 273-286 (GVSLQGVTLDGLTS) the chain is Periplasmic. A helical membrane pass occupies residues 287-310 (ILPLGIIAGLLIGKPLGISLFCWL). Topologically, residues 311–339 (ALRLKLAHLPEGTTYQQIMVVGILCGIGF) are cytoplasmic. The chain crosses the membrane as a helical span at residues 340 to 350 (TMSIFIASLAF). At 351–357 (GSVDPEL) the chain is on the periplasmic side. Residues 358 to 380 (INWAKLGILVGSISSAVIGYSWL) form a helical membrane-spanning segment. At 381–388 (RVRLRPSV) the chain is on the cytoplasmic side.

The protein belongs to the NhaA Na(+)/H(+) (TC 2.A.33) antiporter family.

It is found in the cell inner membrane. It carries out the reaction Na(+)(in) + 2 H(+)(out) = Na(+)(out) + 2 H(+)(in). Its function is as follows. Na(+)/H(+) antiporter that extrudes sodium in exchange for external protons. In Shigella flexneri serotype 5b (strain 8401), this protein is Na(+)/H(+) antiporter NhaA.